A 402-amino-acid polypeptide reads, in one-letter code: Glutamyl-tRNA reductase (402 aa).

Residues 48–51 (TCNR), serine 91, 96–98 (EDQ), and glutamine 102 each bind substrate. The Nucleophile role is filled by cysteine 49. 171-176 (GAGKMG) contributes to the NADP(+) binding site.

This sequence belongs to the glutamyl-tRNA reductase family. In terms of assembly, homodimer.

The catalysed reaction is (S)-4-amino-5-oxopentanoate + tRNA(Glu) + NADP(+) = L-glutamyl-tRNA(Glu) + NADPH + H(+). It functions in the pathway porphyrin-containing compound metabolism; protoporphyrin-IX biosynthesis; 5-aminolevulinate from L-glutamyl-tRNA(Glu): step 1/2. In terms of biological role, catalyzes the NADPH-dependent reduction of glutamyl-tRNA(Glu) to glutamate 1-semialdehyde (GSA). This chain is Glutamyl-tRNA reductase, found in Methanothermobacter thermautotrophicus (strain ATCC 29096 / DSM 1053 / JCM 10044 / NBRC 100330 / Delta H) (Methanobacterium thermoautotrophicum).